The following is a 933-amino-acid chain: MYIKVKLMSNALEKINNFFKEKSWIKVFLIILMLMFVSFQLRAQTADMKFAQDNEFLKDMFSDEHGRMYLLALDPYYYLRLSENLYNNGHCGDTIKVVDGKETPYDLYQYAPPGHPLPWEPPVICLATLAIYYIWHSIDLTVTIMNAAFWVPAVLGMLLGIPIYFVVRRVTNSNIGGIAGAIALISAPGLLYKTCAGFADTPIFEVLPILFIVWFILESIHSQEKTALFKKDLKNPISLFVIAALIIELIIGAYLNIASGESVVIASILFYTVSLAFILAGLIIAGIKKLKGNELEFELFALLAVILTAVSPKMWGAWWYGFDVITAFLVIYIIALALLKSQVKIKEFINIGNLKNIVYLSIFYIFGSFVLLVAIYGMGIAISPITSPLGYNQILSTYTQTTGWPNVYTTVAELAKPSSWSEIFTNAIGSDTIAIVGILGILLSFLSLRYEKVKLDIKYSILLAIWLAVTLYAATKGIRFAALATPPLAIGLGIFVGQLERFLKMKSDIAIFGIGIPAGIFGLLILSKYSAKISQILLPTTYVPIIAYGFLIVLALLAIYKISDIISTLNDKKETIIKVSTLLLCIGVVIPPLSAVVPFSVAPTFNNGWKEGLDWIKANTPNNSVITCWWDNGHIYTYEARRMVTFDGGSQNSPRAYWVGRAFATSNENLSIGIIRMLATSGDEAFKKGSVLMNFTHNNVSKTVKILNEILPVDRSKAYDILTKKYGLSDKKAKLVLNATHPEHPNPDYLITYNRMTDIAPVWSMFGFWNFSLPPNTPNDKREKGAFFKGTAYYLGNGTILANVNVYTYSYVTLINSTNISTAIVQKINGQAKIIGTFKIHKLYIKTPLGVKELVLNKDGQLSEFIRIEADGRGYAWLATRNLEDSIYAKLHFLDGYGLKHIKLVKATIDPTDFGIQPGFKIYKVDYGTDYLK.

At 1 to 22 the chain is on the cytoplasmic side; sequence MYIKVKLMSNALEKINNFFKEK. Residues 23–43 form a helical membrane-spanning segment; sequence SWIKVFLIILMLMFVSFQLRA. Residues 44–146 lie on the Extracellular side of the membrane; that stretch reads QTADMKFAQD…SIDLTVTIMN (103 aa). The DXD motif 1 signature appears at 72-74; that stretch reads ALD. Residue Asp-74 coordinates Mn(2+). The helical transmembrane segment at 147-167 threads the bilayer; the sequence is AAFWVPAVLGMLLGIPIYFVV. The Cytoplasmic portion of the chain corresponds to 168 to 174; sequence RRVTNSN. The chain crosses the membrane as a helical span at residues 175–195; it reads IGGIAGAIALISAPGLLYKTC. Residue Ala-196 is a topological domain, extracellular. The chain crosses the membrane as a helical span at residues 197–217; the sequence is GFADTPIFEVLPILFIVWFIL. Position 200 (Asp-200) interacts with Mn(2+). Residues 200 to 202 carry the DXD motif 2 motif; the sequence is DTP. Over 218–236 the chain is Cytoplasmic; sequence ESIHSQEKTALFKKDLKNP. A helical membrane pass occupies residues 237-257; it reads ISLFVIAALIIELIIGAYLNI. Topologically, residues 258 to 263 are extracellular; it reads ASGESV. Residues 264-284 traverse the membrane as a helical segment; sequence VIASILFYTVSLAFILAGLII. Over 285 to 296 the chain is Cytoplasmic; it reads AGIKKLKGNELE. The chain crosses the membrane as a helical span at residues 297–317; it reads FELFALLAVILTAVSPKMWGA. Position 318 (Trp-318) is a topological domain, extracellular. The chain crosses the membrane as a helical span at residues 319 to 339; sequence WYGFDVITAFLVIYIIALALL. Topologically, residues 340–361 are cytoplasmic; that stretch reads KSQVKIKEFINIGNLKNIVYLS. The helical transmembrane segment at 362–382 threads the bilayer; it reads IFYIFGSFVLLVAIYGMGIAI. The Extracellular segment spans residues 383 to 427; it reads SPITSPLGYNQILSTYTQTTGWPNVYTTVAELAKPSSWSEIFTNA. The short motif at 410–413 is the TIXE motif element; it reads TVAE. Residue Glu-413 coordinates Mn(2+). Residues 428–448 form a helical membrane-spanning segment; it reads IGSDTIAIVGILGILLSFLSL. Over 449-454 the chain is Cytoplasmic; it reads RYEKVK. The helical transmembrane segment at 455–475 threads the bilayer; the sequence is LDIKYSILLAIWLAVTLYAAT. Topologically, residues 476-479 are extracellular; it reads KGIR. An a glycophospholipid-binding site is contributed by Arg-479. A helical membrane pass occupies residues 480-500; that stretch reads FAALATPPLAIGLGIFVGQLE. Over 501 to 581 the chain is Cytoplasmic; it reads RFLKMKSDIA…KKETIIKVST (81 aa). A helical transmembrane segment spans residues 582 to 602; that stretch reads LLLCIGVVIPPLSAVVPFSVA. The Extracellular portion of the chain corresponds to 603 to 933; sequence PTFNNGWKEG…KVDYGTDYLK (331 aa). The tract at residues 629-631 is interacts with target acceptor peptide in protein substrate; that stretch reads WWD. The WWDYG motif signature appears at 629-633; it reads WWDNG. The short motif at 756 to 763 is the MI motif element; sequence MTDIAPVW.

Belongs to the STT3 family. The cofactor is Mn(2+). Mg(2+) is required as a cofactor.

It is found in the cell membrane. The catalysed reaction is an archaeal dolichyl phosphooligosaccharide + [protein]-L-asparagine = an archaeal dolichyl phosphate + a glycoprotein with the oligosaccharide chain attached by N-beta-D-glycosyl linkage to a protein L-asparagine.. Its pathway is cell surface structure biogenesis; S-layer biogenesis. It participates in protein modification; protein glycosylation. Its function is as follows. Oligosaccharyl transferase (OST) that catalyzes the initial transfer of a defined glycan (ManNAcGlc-2,3-diNAcAGlcNAc in Methanococci) from the lipid carrier dolichol-monophosphate to an asparagine residue within an Asn-X-Ser/Thr consensus motif in nascent polypeptide chains, the first step in protein N-glycosylation. Involved in the assembly of an N-linked disaccharide that decorates the S-layer glycoprotein and flagellins. This chain is Dolichyl-phosphooligosaccharide-protein glycotransferase (aglB), found in Methanocaldococcus jannaschii (strain ATCC 43067 / DSM 2661 / JAL-1 / JCM 10045 / NBRC 100440) (Methanococcus jannaschii).